The chain runs to 64 residues: PYLa/PGLa B (64 aa).

Residues 1 to 20 (MYKQIFLCLIIAALCATIMA) form the signal peptide. Positions 21-35 (EASALADADDDDDKR) are excised as a propeptide. A Leucine amide modification is found at Leu59. A propeptide spanning residues 60–64 (GRRDS) is cleaved from the precursor.

It belongs to the gastrin/cholecystokinin family. Magainin subfamily. In terms of tissue distribution, expressed by the skin glands. Synthesized in the stomach and stored in a novel granular multinucleated cell in the gastric mucosa. Stored as active, processed peptides in large granules within the granular gland secretions of the skin.

Its subcellular location is the secreted. PGLa and PGLa-H display a broad-spectrum of antibacterial activity against a range of Gram-positive and Gram-negative bacteria. PGLa also displays antifungal activity against C.albicans ATCC 14053. PGLa-H shows moderate antibacterial activity against the multidrug-resistant methicillin-resistant S.aureus (MRSA) but exhibits very little hemolytic activity. In Xenopus laevis (African clawed frog), this protein is PYLa/PGLa B (pgla-b).